The chain runs to 348 residues: Pyruvate dehydrogenase E1 component subunit alpha (348 aa).

A disordered region spans residues 1-21; sequence MAPRKSASVSSRKTAAKPAKK.

Heterodimer of an alpha and a beta chain. The cofactor is thiamine diphosphate.

It carries out the reaction N(6)-[(R)-lipoyl]-L-lysyl-[protein] + pyruvate + H(+) = N(6)-[(R)-S(8)-acetyldihydrolipoyl]-L-lysyl-[protein] + CO2. In terms of biological role, the pyruvate dehydrogenase complex catalyzes the overall conversion of pyruvate to acetyl-CoA and CO(2). It contains multiple copies of three enzymatic components: pyruvate dehydrogenase (E1), dihydrolipoamide acetyltransferase (E2) and lipoamide dehydrogenase (E3). The sequence is that of Pyruvate dehydrogenase E1 component subunit alpha (pdhA) from Rhizobium meliloti (strain 1021) (Ensifer meliloti).